The following is a 447-amino-acid chain: Glutamate-1-semialdehyde 2,1-aminomutase (447 aa).

Lys272 is modified (N6-(pyridoxal phosphate)lysine).

This sequence belongs to the class-III pyridoxal-phosphate-dependent aminotransferase family. HemL subfamily. Homodimer. It depends on pyridoxal 5'-phosphate as a cofactor.

It is found in the cytoplasm. It catalyses the reaction (S)-4-amino-5-oxopentanoate = 5-aminolevulinate. It functions in the pathway porphyrin-containing compound metabolism; protoporphyrin-IX biosynthesis; 5-aminolevulinate from L-glutamyl-tRNA(Glu): step 2/2. The sequence is that of Glutamate-1-semialdehyde 2,1-aminomutase from Leifsonia xyli subsp. xyli (strain CTCB07).